The following is a 468-amino-acid chain: 3-isopropylmalate dehydratase large subunit (468 aa).

[4Fe-4S] cluster contacts are provided by Cys349, Cys409, and Cys412.

Belongs to the aconitase/IPM isomerase family. LeuC type 1 subfamily. As to quaternary structure, heterodimer of LeuC and LeuD. It depends on [4Fe-4S] cluster as a cofactor.

It carries out the reaction (2R,3S)-3-isopropylmalate = (2S)-2-isopropylmalate. The protein operates within amino-acid biosynthesis; L-leucine biosynthesis; L-leucine from 3-methyl-2-oxobutanoate: step 2/4. Functionally, catalyzes the isomerization between 2-isopropylmalate and 3-isopropylmalate, via the formation of 2-isopropylmaleate. The sequence is that of 3-isopropylmalate dehydratase large subunit from Jannaschia sp. (strain CCS1).